The sequence spans 430 residues: Asparagine--tRNA ligase (430 aa).

This sequence belongs to the class-II aminoacyl-tRNA synthetase family. Homodimer.

Its subcellular location is the cytoplasm. It catalyses the reaction tRNA(Asn) + L-asparagine + ATP = L-asparaginyl-tRNA(Asn) + AMP + diphosphate + H(+). This is Asparagine--tRNA ligase from Staphylococcus aureus (strain MSSA476).